The sequence spans 4558 residues: Multifunctional-autoprocessing repeats-in-toxin (4558 aa).

Residues 1–32 (MVFYLIPKRRVWLMGKPFWRSVEYFFTGNYSA) form the signal peptide. RtxA repeat units lie at residues 114 to 131 (GAAG…GDVS), 134 to 151 (GAAA…GNVT), 154 to 170 (GAGG…QGNL), 174 to 197 (GAGA…GDVT), 200 to 217 (GAGA…GNIT), 220 to 237 (GAGA…GDIT), 268 to 285 (GVGG…GDIH), 288 to 304 (GGGA…GNDF), 594 to 611 (GAGG…GNVH), 614 to 630 (GGGI…FGNT), 634 to 651 (GGGA…GDLT), 654 to 668 (GAGL…SEQG), 751 to 763 (AGGA…MGEG), 769 to 781 (MLGG…HISN), 792 to 808 (ALGG…GNTL), 811 to 826 (MGGG…DGTT), 830 to 845 (MVGG…NGDT), 851 to 865 (GVGN…GQTL), 868 to 885 (MGAA…TSIA), 887 to 901 (MIGA…GEGN), 906 to 920 (MGGL…GNGD), 925 to 942 (MVAE…MSVA), 944 to 960 (MLAK…GTTL), 982 to 994 (MIGQ…KVGN), 1001 to 1016 (MVGK…DGTS), 1041 to 1053 (GKAN…GDGL), 1077 to 1089 (AAAK…HVGD), 1097 to 1112 (AGKG…GTTV), 1120 to 1132 (GNVM…GTTI), 1135 to 1152 (AKGK…LGVN), 1155 to 1169 (WGQA…DGDR), 1173 to 1189 (AKGE…GQEV), 1194 to 1209 (GEAN…DDYT), 1211 to 1227 (AWGK…GQNV), 1230 to 1246 (AKGE…GDSF), 1252 to 1266 (KGNI…MQVT), 1268 to 1285 (AKGQ…LNVT), 1306 to 1323 (AWGK…LNVA), and 1325 to 1342 (MKGK…LNIN). Disordered stretches follow at residues 1623–1688 (HATQ…KEES), 1752–1779 (TLSD…QNRA), and 1791–1890 (DAEK…NADG). Positions 1625–1634 (TQNPAAQNAL) are enriched in polar residues. Positions 1635-1654 (SDKERAEADRQRLEQEKQKQ) are enriched in basic and acidic residues. Residues 1660 to 1679 (GSQSQLESTDQQALENNGQA) are compositionally biased toward polar residues. Positions 1791-1815 (DAEKRKADALAKGKDAQQAESDAHH) are enriched in basic and acidic residues. Residues 1879 to 1888 (HVNTDSQTNA) are compositionally biased toward polar residues. Positions 1988 to 2422 (VPGFKSHFAS…HAEQWAKITA (435 aa)) constitute an ACD domain. 1999 to 2003 (SIGIE) lines the ATP pocket. Mg(2+)-binding residues include glutamate 2003, glutamate 2065, and glutamine 2149. Arginine 2255 serves as a coordination point for ATP. Mg(2+) is bound at residue glutamate 2326. Residues 2574–2658 (ELMSVTELLD…SLLNQVNTRL (85 aa)) are membrane localization region (MLD). A rho inactivation domain (RID) region spans residues 2734 to 3098 (EYGQTVADTI…HQVTDVLDAL (365 aa)). Residues 3195–3310 (VVLFLHGSGS…MPSMTKAITA (116 aa)) form an ABH effector region region. Residues 3404 to 3426 (ASVDEDLDQQGLDTTSTKDQGIS) are disordered. The span at 3414–3426 (GLDTTSTKDQGIS) shows a compositional bias: polar residues. One can recognise a Peptidase C80 domain in the interval 3462-3646 (PTTDGGETRF…AENNKVSLSW (185 aa)). 1D-myo-inositol hexakisphosphate contacts are provided by residues 3468-3470 (ETR), 3495-3496 (KH), and arginine 3526. The active-site For cysteine protease activity is histidine 3532. Serine 3577 is a binding site for 1D-myo-inositol hexakisphosphate. Cysteine 3581 (nucleophile; for cysteine protease activity) is an active-site residue. Residues 3610 to 3612 (SVR), 3623 to 3624 (RK), lysine 3636, and lysine 3641 each bind 1D-myo-inositol hexakisphosphate.

Mg(2+) is required as a cofactor.

The protein resides in the secreted. It localises to the host cytoplasm. It is found in the host cytosol. Its subcellular location is the host cell membrane. The enzyme catalyses L-lysyl-/S-(2E,6E,10E)-geranylgeranyl-L-cysteinyl-[protein] + hexadecanoyl-CoA = N(6)-hexadecanoyl-L-lysyl-/S-(2E,6E,10E)-geranylgeranyl-L-cysteinyl-[protein] + CoA + H(+). It catalyses the reaction L-lysyl-/S-(2E,6E,10E)-geranylgeranyl-L-cysteinyl-[protein] + dodecanoyl-CoA = N(6)-dodecanoyl-L-lysyl-/S-(2E,6E,10E)-geranylgeranyl-L-cysteinyl-[protein] + CoA + H(+). The catalysed reaction is L-lysyl-/S-(2E,6E,10E)-geranylgeranyl-L-cysteinyl-[protein] + decanoyl-CoA = N(6)-decanoyl-L-lysyl-/S-(2E,6E,10E)-geranylgeranyl-L-cysteinyl-[protein] + CoA + H(+). Protease activity is inhibited by N-ethylmaleimide but not other protease inhibitors. Protease activity is inhibited by aza-leucine epoxide. Protease activity is activated upon binding inositol hexakisphosphate (InsP6) via an allosteric mechanism: the active site is disordered or occluded in the absence of InsP6, protecting the protease active-site sulfhydryl until the toxin enters a eukaryotic cell. Upon processing at the Leu-3441-Ala-3442 site, the peptidase C80 domain is converted to a form with much reduced affinity for InsP6, but is reactivated for high affinity binding of InsP6 by cooperative binding of both a new substrate and InsP6. Reactivation allows cleavage at other sites, specifically at Leu residues between the effector domains. Its function is as follows. Precursor of a multifunctional toxin that causes destruction of the actin cytoskeleton by covalent cross-linking of actin and inactivation of Rho GTPases when translocated into the host cytoplasm. Upon translocation into the host cell, undergoes autoprocessing in cis mediated by the peptidase C80 domain (also named CPD domain): the protease activity is activated upon binding inositol hexakisphosphate (InsP6) present at the host cell membrane and delivers the Cysteine protease domain-containing toxin F3 chain to the host cytosol. The Cysteine protease domain-containing toxin F3 chain will then further cleave and release effector toxin chains that cause disassembly of the actin cytoskeleton and enhance V.cholerae colonization of the small intestine, possibly by facilitating evasion of phagocytic cells. Functionally, following autocatalytic cleavage in cis at the Leu-3441-Ala-3442 site, this chain mediates processing in trans to release other individual toxin chains to the host cytosol. Released effector toxin chains cause disassembly of the actin cytoskeleton and enhance V.cholerae colonization of the small intestine, possibly by facilitating evasion of phagocytic cells. Actin-directed toxin that catalyzes the covalent cross-linking of host cytoplasmic monomeric actin. Mediates the cross-link between 'Lys-50' of one monomer and 'Glu-270' of another actin monomer, resulting in formation of highly toxic actin oligomers that cause cell rounding. The toxin can be highly efficient at very low concentrations by acting on formin homology family proteins: toxic actin oligomers bind with high affinity to formins and adversely affect both nucleation and elongation abilities of formins, causing their potent inhibition in both profilin-dependent and independent manners. Acts as an acid--amino-acid ligase that transfers the gamma-phosphoryl group of ATP to the 'Glu-270' actin residue, resulting in the formation of an activated acyl phosphate intermediate. This intermediate is further hydrolyzed and the energy of hydrolysis is utilized for the formation of the amide bond between actin subunits. In terms of biological role, N-epsilon-fatty acyltransferase that mediates lysine-palmitoylation of host Rho GTPase proteins, with a strong preference for host Rac1. After delivery to the host cytosol, localizes to the host cell membrane where it palmitoylates host Rho GTPase proteins, resulting in loss of all active GTP-bound Rho and subsequent actin depolymerization. Prenylation of host Rac1 at the C-terminus is required for lysine-palmitoylation. Its function is as follows. Indirectly activates the small GTPase CDC42. This chain is Multifunctional-autoprocessing repeats-in-toxin, found in Vibrio cholerae serotype O1 (strain ATCC 39315 / El Tor Inaba N16961).